The following is a 266-amino-acid chain: Cyclin-C (266 aa).

One can recognise a Cyclin N-terminal domain in the interval 47-151; that stretch reads IIQVLGEQLK…LLENLDCCLI (105 aa).

The protein belongs to the cyclin family. Cyclin C subfamily. Component of the Cdk8 module of the Mediator complex.

It localises to the nucleus. Functionally, component of the Mediator complex, a coactivator involved in regulated gene transcription of nearly all RNA polymerase II-dependent genes. Mediator functions as a bridge to convey information from gene-specific regulatory proteins to the basal RNA polymerase II transcription machinery. Mediator is recruited to promoters by direct interactions with regulatory proteins and serves as a scaffold for the assembly of a functional preinitiation complex with RNA polymerase II and the general transcription factors. Binds to and activates cyclin-dependent kinase Cdk8 that phosphorylates the CTD (C-terminal domain) of the large subunit of RNA polymerase II (RNAp II), which may inhibit the formation of a transcription initiation complex. The protein is Cyclin-C (CycC) of Anopheles gambiae (African malaria mosquito).